Reading from the N-terminus, the 485-residue chain is Glutamyl-tRNA(Gln) amidotransferase subunit A (485 aa).

Active-site charge relay system residues include Lys-80 and Ser-155. Catalysis depends on Ser-179, which acts as the Acyl-ester intermediate.

It belongs to the amidase family. GatA subfamily. As to quaternary structure, heterotrimer of A, B and C subunits.

It carries out the reaction L-glutamyl-tRNA(Gln) + L-glutamine + ATP + H2O = L-glutaminyl-tRNA(Gln) + L-glutamate + ADP + phosphate + H(+). In terms of biological role, allows the formation of correctly charged Gln-tRNA(Gln) through the transamidation of misacylated Glu-tRNA(Gln) in organisms which lack glutaminyl-tRNA synthetase. The reaction takes place in the presence of glutamine and ATP through an activated gamma-phospho-Glu-tRNA(Gln). The chain is Glutamyl-tRNA(Gln) amidotransferase subunit A from Leptospira borgpetersenii serovar Hardjo-bovis (strain L550).